The chain runs to 413 residues: Exodeoxyribonuclease 7 large subunit (413 aa).

This sequence belongs to the XseA family. As to quaternary structure, heterooligomer composed of large and small subunits.

The protein localises to the cytoplasm. It carries out the reaction Exonucleolytic cleavage in either 5'- to 3'- or 3'- to 5'-direction to yield nucleoside 5'-phosphates.. In terms of biological role, bidirectionally degrades single-stranded DNA into large acid-insoluble oligonucleotides, which are then degraded further into small acid-soluble oligonucleotides. In Corynebacterium efficiens (strain DSM 44549 / YS-314 / AJ 12310 / JCM 11189 / NBRC 100395), this protein is Exodeoxyribonuclease 7 large subunit.